The sequence spans 588 residues: Adenine deaminase (588 aa).

The protein belongs to the metallo-dependent hydrolases superfamily. Adenine deaminase family. In terms of assembly, homodimer. The cofactor is Mn(2+).

It carries out the reaction adenine + H2O + H(+) = hypoxanthine + NH4(+). The sequence is that of Adenine deaminase from Shigella sonnei (strain Ss046).